Consider the following 372-residue polypeptide: MALNDFHVSEPYTLGIELEMQVINPPGYDLSQDSSTLIDAVKPQLTAGEIKHDITESMLEMATGVCRDIDQAAAQLSAMQHVILQAASEHHLGICGGGTHPFQKWQRQEVCDNERYQRTLENFGYLIQQATVFGQHVHVGCANGDDAIYLLHGLSHFVPHFIALSAASPHMQGSDTRFACARLNIFSAFPDNGPMPWVSNWQEFAGLFRRLSYTTMIDSIKDLHWDIRPNPAFGTVEVRVMDTPLTLDHAINMAGLIQATAHWLLTERPFKPQEQDYLLYKFNRFQACRYGLEGVITDAYTGDRRRLADDTLRLLDNVTPSARKLGADSAIDALRLQVKKGGNEAQYMREFIADGGSLIGLVQKHCEIWAGQ.

This sequence belongs to the glutamate--cysteine ligase type 2 family. YbdK subfamily. As to quaternary structure, homodimer.

The enzyme catalyses L-cysteine + L-glutamate + ATP = gamma-L-glutamyl-L-cysteine + ADP + phosphate + H(+). Its function is as follows. ATP-dependent carboxylate-amine ligase which exhibits weak glutamate--cysteine ligase activity. The polypeptide is Putative glutamate--cysteine ligase 2 (ybdK) (Salmonella dublin (strain CT_02021853)).